A 349-amino-acid polypeptide reads, in one-letter code: Hydroxymethylglutaryl-CoA synthase (349 aa).

Residues Asp-29 and Ala-30 each contribute to the (3S)-3-hydroxy-3-methylglutaryl-CoA site. Residue Glu-81 is the Proton donor/acceptor of the active site. Cys-113, Thr-154, Thr-202, and His-235 together coordinate (3S)-3-hydroxy-3-methylglutaryl-CoA. Cys-113 serves as the catalytic Acyl-thioester intermediate. The Proton donor/acceptor role is filled by His-235. A CoA-binding site is contributed by Arg-240. Positions 244, 267, and 297 each coordinate (3S)-3-hydroxy-3-methylglutaryl-CoA.

This sequence belongs to the thiolase-like superfamily. Archaeal HMG-CoA synthase family. In terms of assembly, interacts with acetoacetyl-CoA thiolase that catalyzes the precedent step in the pathway and with a DUF35 protein. The acetoacetyl-CoA thiolase/HMG-CoA synthase complex channels the intermediate via a fused CoA-binding site, which allows for efficient coupling of the endergonic thiolase reaction with the exergonic HMGCS reaction.

It catalyses the reaction acetoacetyl-CoA + acetyl-CoA + H2O = (3S)-3-hydroxy-3-methylglutaryl-CoA + CoA + H(+). It participates in metabolic intermediate biosynthesis; (R)-mevalonate biosynthesis; (R)-mevalonate from acetyl-CoA: step 2/3. In terms of biological role, catalyzes the condensation of acetyl-CoA with acetoacetyl-CoA to form 3-hydroxy-3-methylglutaryl-CoA (HMG-CoA). Functions in the mevalonate (MVA) pathway leading to isopentenyl diphosphate (IPP), a key precursor for the biosynthesis of isoprenoid compounds that are building blocks of archaeal membrane lipids. This Caldivirga maquilingensis (strain ATCC 700844 / DSM 13496 / JCM 10307 / IC-167) protein is Hydroxymethylglutaryl-CoA synthase.